The chain runs to 600 residues: Tripeptidyl-peptidase 1 (600 aa).

Positions 1-22 (MNIKFNLIIIILFILFISNVNC) are cleaved as a signal peptide. The propeptide at 23 to 220 (KKIKNKKHLT…GGGGKVNGIG (198 aa)) is removed in mature form. Residues asparagine 91, asparagine 259, and asparagine 266 are each glycosylated (N-linked (GlcNAc...) asparagine). The 353-residue stretch at 248-600 (YLSPDLIRKE…FDELVKYCLE (353 aa)) folds into the Peptidase S53 domain. Residues glutamate 318 and aspartate 322 each act as charge relay system in the active site. Cysteines 411 and 570 form a disulfide. N-linked (GlcNAc...) asparagine glycosylation is found at asparagine 475 and asparagine 483. Serine 514 (charge relay system) is an active-site residue. Positions 559, 560, 579, and 581 each coordinate Ca(2+).

As to quaternary structure, monomer. Requires Ca(2+) as cofactor. Post-translationally, activated by autocatalytic proteolytical processing upon acidification. N-glycosylation is required for processing and activity.

The protein resides in the secreted. It carries out the reaction Release of an N-terminal tripeptide from a polypeptide, but also has endopeptidase activity.. In terms of biological role, serine protease with tripeptidyl-peptidase I activity. This Dictyostelium discoideum (Social amoeba) protein is Tripeptidyl-peptidase 1 (tpp1).